The sequence spans 179 residues: Guanosine-3',5'-bis(diphosphate) 3'-pyrophosphohydrolase MESH1 (179 aa).

Residues 32–127 (YINHPLGVAR…VKLADKLYNL (96 aa)) form the HD domain. The Mn(2+) site is built by H35, H61, and D62. Residues E65 and D66 each act as nucleophile in the active site. D122 contributes to the Mn(2+) binding site.

It belongs to the MESH1 family. Mn(2+) is required as a cofactor.

The catalysed reaction is guanosine 3',5'-bis(diphosphate) + H2O = GDP + diphosphate + H(+). PpGpp hydrolyzing enzyme involved in starvation response. The sequence is that of Guanosine-3',5'-bis(diphosphate) 3'-pyrophosphohydrolase MESH1 (hddc3) from Xenopus tropicalis (Western clawed frog).